Consider the following 216-residue polypeptide: GTP cyclohydrolase 1 (216 aa).

3 residues coordinate Zn(2+): cysteine 108, histidine 111, and cysteine 179.

It belongs to the GTP cyclohydrolase I family. As to quaternary structure, homomer.

It carries out the reaction GTP + H2O = 7,8-dihydroneopterin 3'-triphosphate + formate + H(+). The protein operates within cofactor biosynthesis; 7,8-dihydroneopterin triphosphate biosynthesis; 7,8-dihydroneopterin triphosphate from GTP: step 1/1. This Shewanella baltica (strain OS223) protein is GTP cyclohydrolase 1.